We begin with the raw amino-acid sequence, 134 residues long: Methylmalonyl-CoA decarboxylase subunit gamma (134 aa).

Residues 28 to 38 (APAARPAAAPA) are compositionally biased toward low complexity. Positions 28–67 (APAARPAAAPAPAAPKPAAAPAPAPAPKTTAAGAGAGANT) are disordered. Positions 39 to 53 (PAAPKPAAAPAPAPA) are enriched in pro residues. The segment covering 54–67 (PKTTAAGAGAGANT) has biased composition (low complexity). A Biotinyl-binding domain is found at 58-134 (AAGAGAGANT…NAGDILVVLS (77 aa)). K100 is modified (N6-biotinyllysine).

As to quaternary structure, the methylmalonyl-CoA decarboxylase is composed of four subunits: the carboxyltransferase alpha subunit (MmdA), the tunnel beta subunit (MmdB), the biotin-containing gamma subunit (MmdC) and the delta subunit (MmdD). Biotin serves as cofactor.

It is found in the cell membrane. The enzyme catalyses (S)-methylmalonyl-CoA + Na(+)(in) + H(+)(out) = propanoyl-CoA + Na(+)(out) + CO2. In terms of biological role, biotin-containing subunit of the sodium ion pump methylmalonyl-CoA decarboxylase, which converts the chemical energy of a decarboxylation reaction into an electrochemical gradient of Na(+) ions across the cytoplasmic membrane, thereby creating a sodium ion motive force that is used for ATP synthesis. This is Methylmalonyl-CoA decarboxylase subunit gamma from Propionigenium modestum.